We begin with the raw amino-acid sequence, 451 residues long: Chromosomal replication initiator protein DnaA (451 aa).

The segment at 1-71 (MSEQEIWKKV…QTIMKDVIGY (71 aa)) is domain I, interacts with DnaA modulators. Residues 71–112 (YEVEPKFFTAEQLAELDETSRKSNTPSEPQRQIIEYGHEGTD) are domain II. Residues 113–329 (QFNTHNTFDT…GALTRLLAYS (217 aa)) form a domain III, AAA+ region region. The ATP site is built by G157, G159, K160, and T161. The interval 330–451 (KLQGRPITTE…EDLEKEIRNQ (122 aa)) is domain IV, binds dsDNA.

Belongs to the DnaA family. Oligomerizes as a right-handed, spiral filament on DNA at oriC.

The protein resides in the cytoplasm. Its function is as follows. Plays an essential role in the initiation and regulation of chromosomal replication. ATP-DnaA binds to the origin of replication (oriC) to initiate formation of the DNA replication initiation complex once per cell cycle. Binds the DnaA box (a 9 base pair repeat at the origin) and separates the double-stranded (ds)DNA. Forms a right-handed helical filament on oriC DNA; dsDNA binds to the exterior of the filament while single-stranded (ss)DNA is stabiized in the filament's interior. The ATP-DnaA-oriC complex binds and stabilizes one strand of the AT-rich DNA unwinding element (DUE), permitting loading of DNA polymerase. After initiation quickly degrades to an ADP-DnaA complex that is not apt for DNA replication. Binds acidic phospholipids. This Staphylococcus haemolyticus (strain JCSC1435) protein is Chromosomal replication initiator protein DnaA.